The chain runs to 677 residues: Methionine--tRNA ligase (677 aa).

The short motif at 15–25 (PYANGSIHLGH) is the 'HIGH' region element. Zn(2+)-binding residues include Cys146, Cys149, Cys159, and Cys162. The 'KMSKS' region motif lies at 333 to 337 (KMSKS). Residue Lys336 participates in ATP binding. One can recognise a tRNA-binding domain in the interval 575 to 677 (DFAKVDLRVA…AGAKPGHQVK (103 aa)).

This sequence belongs to the class-I aminoacyl-tRNA synthetase family. MetG type 1 subfamily. In terms of assembly, homodimer. The cofactor is Zn(2+).

Its subcellular location is the cytoplasm. The enzyme catalyses tRNA(Met) + L-methionine + ATP = L-methionyl-tRNA(Met) + AMP + diphosphate. Is required not only for elongation of protein synthesis but also for the initiation of all mRNA translation through initiator tRNA(fMet) aminoacylation. This chain is Methionine--tRNA ligase, found in Shigella dysenteriae serotype 1 (strain Sd197).